Reading from the N-terminus, the 379-residue chain is Homoserine O-acetyltransferase (379 aa).

The region spanning 52–356 (NVVMVLHALT…IRGHDGFLVE (305 aa)) is the AB hydrolase-1 domain. Ser-157 (nucleophile) is an active-site residue. Arg-227 contributes to the substrate binding site. Residues Asp-320 and His-350 contribute to the active site. Asp-351 provides a ligand contact to substrate.

It belongs to the AB hydrolase superfamily. MetX family. As to quaternary structure, homodimer.

It localises to the cytoplasm. The enzyme catalyses L-homoserine + acetyl-CoA = O-acetyl-L-homoserine + CoA. Its pathway is amino-acid biosynthesis; L-methionine biosynthesis via de novo pathway; O-acetyl-L-homoserine from L-homoserine: step 1/1. Functionally, transfers an acetyl group from acetyl-CoA to L-homoserine, forming acetyl-L-homoserine. In Mycobacterium marinum (strain ATCC BAA-535 / M), this protein is Homoserine O-acetyltransferase.